The following is a 196-amino-acid chain: Transmembrane protein 126A (196 aa).

Residues Met-1–Glu-34 lie on the Mitochondrial matrix side of the membrane. A helical transmembrane segment spans residues Tyr-35 to Phe-55. The Mitochondrial intermembrane segment spans residues Arg-56–Arg-57. The chain crosses the membrane as a helical span at residues Ile-58–Leu-78. The Mitochondrial matrix portion of the chain corresponds to Thr-79 to Arg-106. Residues Gly-107 to Asn-127 traverse the membrane as a helical segment. The Mitochondrial intermembrane portion of the chain corresponds to Gly-128–Lys-159. Residues Met-160–Ser-176 form a helical membrane-spanning segment. Residues Arg-177–Gln-196 lie on the Mitochondrial matrix side of the membrane.

The protein belongs to the TMEM126 family. As to quaternary structure, interacts with OXA1L; promoting cotranslational quality control in mitochondria.

The protein localises to the mitochondrion inner membrane. Protein required for the cotranslational protein quality control in the inner membrane of the mitochondria. Associates with newly synthesized polypeptides and may act as a chaperone that cooperates with OXA1L for the insertion of newly synthesized mitochondrial proteins into the inner membrane. Required for the assembly of the ND4 module of mitochondrial complex I. This chain is Transmembrane protein 126A (Tmem126a), found in Rattus norvegicus (Rat).